A 388-amino-acid polypeptide reads, in one-letter code: Arginine biosynthesis bifunctional protein ArgJ (388 aa).

Positions 150, 172, 183, 263, 383, and 388 each coordinate substrate. The Nucleophile role is filled by Thr183.

The protein belongs to the ArgJ family. In terms of assembly, heterotetramer of two alpha and two beta chains.

Its subcellular location is the cytoplasm. It carries out the reaction N(2)-acetyl-L-ornithine + L-glutamate = N-acetyl-L-glutamate + L-ornithine. It catalyses the reaction L-glutamate + acetyl-CoA = N-acetyl-L-glutamate + CoA + H(+). It participates in amino-acid biosynthesis; L-arginine biosynthesis; L-ornithine and N-acetyl-L-glutamate from L-glutamate and N(2)-acetyl-L-ornithine (cyclic): step 1/1. It functions in the pathway amino-acid biosynthesis; L-arginine biosynthesis; N(2)-acetyl-L-ornithine from L-glutamate: step 1/4. Catalyzes two activities which are involved in the cyclic version of arginine biosynthesis: the synthesis of N-acetylglutamate from glutamate and acetyl-CoA as the acetyl donor, and of ornithine by transacetylation between N(2)-acetylornithine and glutamate. The protein is Arginine biosynthesis bifunctional protein ArgJ of Corynebacterium efficiens (strain DSM 44549 / YS-314 / AJ 12310 / JCM 11189 / NBRC 100395).